A 164-amino-acid chain; its full sequence is MKFVILLTIGLLVVAAIPQRRQQQQQQQQQQQRDEREIPPFLEGAPPSVIDEFYNLLKTDENKTDQQTEADVEAFINRLGGSYKVRFTQFMEEVKKARADYERIHQQAVARFSPAAKDADARMSAIADSPHLTTRQKSQQIQAIMDSLSESVRREIINALSPQE.

Positions 1-16 are cleaved as a signal peptide; that stretch reads MKFVILLTIGLLVVAA. The tract at residues 24–43 is disordered; the sequence is QQQQQQQQQRDEREIPPFLE.

The protein belongs to the SXP/RAL-2 family. In terms of tissue distribution, high levels in the hypodermal layer of the adult female.

In Onchocerca volvulus, this protein is OV-17 antigen (OV17).